The sequence spans 168 residues: Photosystem I assembly protein Ycf3 (168 aa).

TPR repeat units follow at residues 35 to 68 (AFTY…EIDP), 72 to 105 (SYIL…NPFL), and 120 to 153 (GEQA…TPGN).

Belongs to the Ycf3 family.

The protein resides in the plastid. It is found in the chloroplast thylakoid membrane. Its function is as follows. Essential for the assembly of the photosystem I (PSI) complex. May act as a chaperone-like factor to guide the assembly of the PSI subunits. This is Photosystem I assembly protein Ycf3 from Liriodendron tulipifera (Tuliptree).